A 211-amino-acid chain; its full sequence is Protein-L-isoaspartate O-methyltransferase (211 aa).

The active site involves serine 59.

Belongs to the methyltransferase superfamily. L-isoaspartyl/D-aspartyl protein methyltransferase family.

Its subcellular location is the cytoplasm. It carries out the reaction [protein]-L-isoaspartate + S-adenosyl-L-methionine = [protein]-L-isoaspartate alpha-methyl ester + S-adenosyl-L-homocysteine. In terms of biological role, catalyzes the methyl esterification of L-isoaspartyl residues in peptides and proteins that result from spontaneous decomposition of normal L-aspartyl and L-asparaginyl residues. It plays a role in the repair and/or degradation of damaged proteins. This Ignicoccus hospitalis (strain KIN4/I / DSM 18386 / JCM 14125) protein is Protein-L-isoaspartate O-methyltransferase.